The following is a 182-amino-acid chain: Small ribosomal subunit protein uS4c (182 aa).

Residues 12 to 31 (PGFTSKRPRSGSDLKNPLRS) form a disordered region. The S4 RNA-binding domain occupies 82–143 (MRLDNILFRL…KQRSKALIQN (62 aa)).

This sequence belongs to the universal ribosomal protein uS4 family. Part of the 30S ribosomal subunit. Contacts protein S5. The interaction surface between S4 and S5 is involved in control of translational fidelity.

It localises to the plastid. The protein resides in the chloroplast. One of the primary rRNA binding proteins, it binds directly to 16S rRNA where it nucleates assembly of the body of the 30S subunit. In terms of biological role, with S5 and S12 plays an important role in translational accuracy. The sequence is that of Small ribosomal subunit protein uS4c (rps4) from Hymenocallis littoralis (Beach spider-lily).